A 496-amino-acid chain; its full sequence is Probable ATP-dependent DNA helicase RecS (496 aa).

Positions 25 to 192 (IESILSGKDT…MNLLELQHAV (168 aa)) constitute a Helicase ATP-binding domain. 38–45 (LPTGGGKS) is a binding site for ATP. Positions 136–139 (DEAH) match the DEAH box motif. Positions 219–363 (RVIQLVENLQ…EIADVIRVLE (145 aa)) constitute a Helicase C-terminal domain.

Belongs to the helicase family. RecQ subfamily. In terms of assembly, interacts with SSB (ssbA) and YpbB.

The protein localises to the cytoplasm. The protein resides in the nucleoid. The catalysed reaction is Couples ATP hydrolysis with the unwinding of duplex DNA by translocating in the 3'-5' direction.. It catalyses the reaction ATP + H2O = ADP + phosphate + H(+). Its function is as follows. Probable 3'-5' DNA helicase. Required in synaptic and/or post-synaptic stages of recombination. Probably has an overlapping function with RecQ. It probably acts to help generate ss-DNA from ds-DNA breaks. The chain is Probable ATP-dependent DNA helicase RecS from Bacillus subtilis (strain 168).